Consider the following 163-residue polypeptide: Nucleotide-binding protein GTNG_0630 (163 aa).

It belongs to the YajQ family.

Functionally, nucleotide-binding protein. The polypeptide is Nucleotide-binding protein GTNG_0630 (Geobacillus thermodenitrificans (strain NG80-2)).